Here is a 248-residue protein sequence, read N- to C-terminus: MAGHSKWANIKHRKAAQDAKRGKLFTKFIRELTVSAREGGSDPDSNPRLRIAIDKALGGNMTRDTIERAIKRGAGELEGQQLETIIYEGYGPGGTAVMVETMTDNRNRTVSGVRNAFSKSGGNLGTDGSVAYLFTKRGVLSYAPGTDEDALMDAALEAGAEDVVSYDDGAIDVFTEPTAFYEVKDALDAAGFVSDNAEIAMIASTKAELDAETAEKFMRLIDTLEEHDDVQEVYHNAEISDEIMESLG.

The protein belongs to the TACO1 family.

The protein resides in the cytoplasm. The sequence is that of Probable transcriptional regulatory protein SO_2432 from Shewanella oneidensis (strain ATCC 700550 / JCM 31522 / CIP 106686 / LMG 19005 / NCIMB 14063 / MR-1).